A 338-amino-acid chain; its full sequence is 2,3-dihydroxybenzoate decarboxylase (338 aa).

Cysteine 251 is a catalytic residue.

It belongs to the metallo-dependent hydrolases superfamily. As to quaternary structure, homotetramer.

It carries out the reaction 2,3-dihydroxybenzoate + H(+) = catechol + CO2. Its pathway is aromatic compound metabolism; benzoate degradation via hydroxylation. Has an absolute substrate specificity for 2,3-DHBA. The sequence is that of 2,3-dihydroxybenzoate decarboxylase from Aspergillus oryzae (strain ATCC 42149 / RIB 40) (Yellow koji mold).